The chain runs to 277 residues: 2,3,4,5-tetrahydropyridine-2,6-dicarboxylate N-succinyltransferase (277 aa).

Arg-106 and Asp-143 together coordinate substrate.

The protein belongs to the transferase hexapeptide repeat family. In terms of assembly, homotrimer.

Its subcellular location is the cytoplasm. It carries out the reaction (S)-2,3,4,5-tetrahydrodipicolinate + succinyl-CoA + H2O = (S)-2-succinylamino-6-oxoheptanedioate + CoA. The protein operates within amino-acid biosynthesis; L-lysine biosynthesis via DAP pathway; LL-2,6-diaminopimelate from (S)-tetrahydrodipicolinate (succinylase route): step 1/3. The polypeptide is 2,3,4,5-tetrahydropyridine-2,6-dicarboxylate N-succinyltransferase (Variovorax paradoxus (strain S110)).